Reading from the N-terminus, the 296-residue chain is Urease accessory protein UreD (296 aa).

This sequence belongs to the UreD family. UreD, UreF and UreG form a complex that acts as a GTP-hydrolysis-dependent molecular chaperone, activating the urease apoprotein by helping to assemble the nickel containing metallocenter of UreC. The UreE protein probably delivers the nickel.

Its subcellular location is the cytoplasm. Functionally, required for maturation of urease via the functional incorporation of the urease nickel metallocenter. In Methylibium petroleiphilum (strain ATCC BAA-1232 / LMG 22953 / PM1), this protein is Urease accessory protein UreD.